We begin with the raw amino-acid sequence, 217 residues long: Ras-related protein Rab-39A (217 aa).

Residues Ser17, Gly20, Lys21, Ser22, Cys23, and Thr44 each coordinate GTP. Ser22 lines the Mg(2+) pocket. The interval 39-47 (PACDPTVGV) is switch-I. 2 residues coordinate Mg(2+): Thr44 and Asp68. GTP-binding residues include Gly71, His127, Lys128, Asp130, Ala158, and Lys159. A switch-II region spans residues 71 to 87 (GQERFRSITRSYYRNSV). S-geranylgeranyl cysteine attachment occurs at residues Cys215 and Cys217. Cys217 carries the cysteine methyl ester modification.

It belongs to the small GTPase superfamily. Rab family. Interacts (GDP-bound) with C9orf72; C9orf72 acts as a GEF for RAB39A. Interacts (GTP-bound) with HOPS complex components VPS39 and VPS41, and STX17; interaction between HOPS components and RAB39A contributes to obtaining a functional HOPS complex that promotes membrane fusion driven by STX17-SNAP29-VAMP8. Interacts with BECN1. Probably associates with the PI3K (PI3KC3/PI3K-III/class III phosphatidylinositol 3-kinase) complex. Interacts with UACA. Interacts with isoform a of RASSF1. Does not interact with isoform c of RASSF1. Mg(2+) is required as a cofactor. Prenylated. Prenylation is required for association with cellular membranes.

It is found in the cell membrane. The protein resides in the cytoplasmic vesicle. It localises to the phagosome membrane. Its subcellular location is the lysosome membrane. The protein localises to the autolysosome membrane. The catalysed reaction is GTP + H2O = GDP + phosphate + H(+). Its activity is regulated as follows. Regulated by guanine nucleotide exchange factors (GEFs) including c9Orf72, which promote the exchange of bound GDP for free GTP. Regulated by GTPase activating proteins (GAPs) which increase the GTP hydrolysis activity. Inhibited by GDP dissociation inhibitors (GDIs). Its function is as follows. The small GTPases Rab are key regulators of intracellular membrane trafficking, from the formation of transport vesicles to their fusion with membranes. Rabs cycle between an inactive GDP-bound form and an active GTP-bound form that is able to recruit to membranes different sets of downstream effectors directly responsible for vesicle formation, movement, tethering and fusion. RAB39A regulates autophagosome-lysosome fusion via recruitment of the HOPS endosomal tethering complex onto lysosomes; this process involves lysosomal RAB39A and autophagosomal RAB2A recruitment of HOPS subcomplexes VPS41-VPS16-VPS18-VPS33A and VPS39-VPS11, respectively, which assemble into a functional complex to mediate membrane tethering and SNAREs-driven membrane fusion. Also negatively regulates lipopolysaccharide (LPS)-induced autophagosome formation in macrophages, possibly by implicating PI3K. Promotes the delivery of MHC-I molecules from the ER to phagosomes and the generation of peptide-loaded MHC-I complexes in phagosomes, thus enhancing antigen cross-presentation by dendritic cells. Plays a role in the maturation and acidification of phagosomes that engulf pathogens, such as S.aureus and M.tuberculosis. Plays a role in the fusion of phagosomes with lysosomes. May be involved in multiple neurite formation. This is Ras-related protein Rab-39A from Homo sapiens (Human).